The chain runs to 141 residues: ATP synthase epsilon chain (141 aa).

It belongs to the ATPase epsilon chain family. As to quaternary structure, F-type ATPases have 2 components, CF(1) - the catalytic core - and CF(0) - the membrane proton channel. CF(1) has five subunits: alpha(3), beta(3), gamma(1), delta(1), epsilon(1). CF(0) has three main subunits: a, b and c.

It is found in the cell inner membrane. Functionally, produces ATP from ADP in the presence of a proton gradient across the membrane. The polypeptide is ATP synthase epsilon chain (Cellvibrio japonicus (strain Ueda107) (Pseudomonas fluorescens subsp. cellulosa)).